The primary structure comprises 381 residues: MRMLIAGGGTGGHVFPGIALAEEVVGRHPGNDVVFVGTERGLEAKVVPAAGFPIELIDVKGLKGKGILSLLLNLLLVPRALLQSHRILRKWRPDVVVGVGGYASGPVVLVAWLLRIPTAVQEQNAIAGFTNRVLGRFVDAAFTAFPEAARHFAGRKVYQLGNPIRRTLMENYMRPEVKHPRPRMLVFGGSQGAHALNMRVIEALPHLADLREALAVTHQTGARDREQVEKGYRACGFEPDVREFIHDMSAAYAGADLVVCRAGATTLAELTVCKKPAILVPFPAAADNHQVVNARSLVVAGAAVMIEERDLTGELLAAEIRAILTHPERRERMARAAGRLGSPQAAKEIADVCAELVRRRWGSPAGQERPGHGPVRPPDLA.

Residues 10 to 12 (TGG), Asn124, Arg165, Ser190, Ile245, and Gln290 contribute to the UDP-N-acetyl-alpha-D-glucosamine site. Residues 361–381 (WGSPAGQERPGHGPVRPPDLA) form a disordered region.

The protein belongs to the glycosyltransferase 28 family. MurG subfamily.

The protein resides in the cell inner membrane. The catalysed reaction is di-trans,octa-cis-undecaprenyl diphospho-N-acetyl-alpha-D-muramoyl-L-alanyl-D-glutamyl-meso-2,6-diaminopimeloyl-D-alanyl-D-alanine + UDP-N-acetyl-alpha-D-glucosamine = di-trans,octa-cis-undecaprenyl diphospho-[N-acetyl-alpha-D-glucosaminyl-(1-&gt;4)]-N-acetyl-alpha-D-muramoyl-L-alanyl-D-glutamyl-meso-2,6-diaminopimeloyl-D-alanyl-D-alanine + UDP + H(+). It participates in cell wall biogenesis; peptidoglycan biosynthesis. Cell wall formation. Catalyzes the transfer of a GlcNAc subunit on undecaprenyl-pyrophosphoryl-MurNAc-pentapeptide (lipid intermediate I) to form undecaprenyl-pyrophosphoryl-MurNAc-(pentapeptide)GlcNAc (lipid intermediate II). This chain is UDP-N-acetylglucosamine--N-acetylmuramyl-(pentapeptide) pyrophosphoryl-undecaprenol N-acetylglucosamine transferase, found in Anaeromyxobacter sp. (strain Fw109-5).